Consider the following 156-residue polypeptide: ATP synthase subunit b (156 aa).

Residues isoleucine 3 to threonine 23 form a helical membrane-spanning segment.

The protein belongs to the ATPase B chain family. In terms of assembly, F-type ATPases have 2 components, F(1) - the catalytic core - and F(0) - the membrane proton channel. F(1) has five subunits: alpha(3), beta(3), gamma(1), delta(1), epsilon(1). F(0) has three main subunits: a(1), b(2) and c(10-14). The alpha and beta chains form an alternating ring which encloses part of the gamma chain. F(1) is attached to F(0) by a central stalk formed by the gamma and epsilon chains, while a peripheral stalk is formed by the delta and b chains.

It is found in the cell inner membrane. Functionally, f(1)F(0) ATP synthase produces ATP from ADP in the presence of a proton or sodium gradient. F-type ATPases consist of two structural domains, F(1) containing the extramembraneous catalytic core and F(0) containing the membrane proton channel, linked together by a central stalk and a peripheral stalk. During catalysis, ATP synthesis in the catalytic domain of F(1) is coupled via a rotary mechanism of the central stalk subunits to proton translocation. Its function is as follows. Component of the F(0) channel, it forms part of the peripheral stalk, linking F(1) to F(0). In Xylella fastidiosa (strain M12), this protein is ATP synthase subunit b.